We begin with the raw amino-acid sequence, 84 residues long: MAKTQSPLQWLATTIIRGYQLLISPMMGPRCRFNPTCSHYAIEAIRLHGVVKGCWFAGKRILRCHPLHPGGEDPVPNKKHRCDK.

It belongs to the UPF0161 family.

The protein localises to the cell inner membrane. In terms of biological role, could be involved in insertion of integral membrane proteins into the membrane. The protein is Putative membrane protein insertion efficiency factor of Shewanella pealeana (strain ATCC 700345 / ANG-SQ1).